The sequence spans 66 residues: U1-theraphotoxin-Cg1d 1 (66 aa).

Positions 1-21 (MKMSALFVIFGLALLFCNSFA) are cleaved as a signal peptide. Positions 22–29 (AELKATGR) are excised as a propeptide. Intrachain disulfides connect cysteine 31-cysteine 46, cysteine 38-cysteine 51, and cysteine 45-cysteine 58. Proline 63 bears the Proline amide mark.

This sequence belongs to the neurotoxin 10 (Hwtx-1) family. 46 (Jztx-7/10/12) subfamily. As to expression, expressed by the venom gland.

It is found in the secreted. Its function is as follows. Probable ion channel inhibitor. The polypeptide is U1-theraphotoxin-Cg1d 1 (Chilobrachys guangxiensis (Chinese earth tiger tarantula)).